A 338-amino-acid polypeptide reads, in one-letter code: tRNA N6-adenosine threonylcarbamoyltransferase (338 aa).

Positions 111 and 115 each coordinate Fe cation. Substrate contacts are provided by residues 133 to 137 (LVSGG), Asp-166, Gly-179, Asp-183, and Asn-275. Position 300 (Asp-300) interacts with Fe cation.

The protein belongs to the KAE1 / TsaD family. Requires Fe(2+) as cofactor.

It is found in the cytoplasm. The enzyme catalyses L-threonylcarbamoyladenylate + adenosine(37) in tRNA = N(6)-L-threonylcarbamoyladenosine(37) in tRNA + AMP + H(+). Functionally, required for the formation of a threonylcarbamoyl group on adenosine at position 37 (t(6)A37) in tRNAs that read codons beginning with adenine. Is involved in the transfer of the threonylcarbamoyl moiety of threonylcarbamoyl-AMP (TC-AMP) to the N6 group of A37, together with TsaE and TsaB. TsaD likely plays a direct catalytic role in this reaction. This Treponema denticola (strain ATCC 35405 / DSM 14222 / CIP 103919 / JCM 8153 / KCTC 15104) protein is tRNA N6-adenosine threonylcarbamoyltransferase.